The sequence spans 349 residues: MTKLRKIIHIDMDYFFAQVEEKANPSLKDKPFAVGGTNPKRGVISTCNYIAREYGVRSAMPTAIAMQKCPNLILLNTDFAKYKAASAVIRDIFYYFTDKVEPLSLDEAYLDVTDVKEYKNSATLIAQAIKQEIFNKTGLTGSAGVAPNKLLAKIASDINKPNGLYVVTPKQVDSFVKDLPVKKLFGVGKVSQEKLKSMGVETCLDLQQLSLATLVDKFGKFGSSLYNYARGIDNREVNPVRIRKSVSVENTYLEDLKTLGACLEKLPSLYDKLTSRMTEEHYKSIIGIVVKFTDTKFNKTSLTRVAKILDKEMLKNLIIELHQKRNHPIRLIGIGVKLGEIDDKQMDLF.

The 182-residue stretch at Ile-7–Gly-188 folds into the UmuC domain. The Mg(2+) site is built by Asp-11 and Asp-106. Residue Glu-107 is part of the active site.

It belongs to the DNA polymerase type-Y family. In terms of assembly, monomer. Mg(2+) is required as a cofactor.

The protein resides in the cytoplasm. It carries out the reaction DNA(n) + a 2'-deoxyribonucleoside 5'-triphosphate = DNA(n+1) + diphosphate. Its function is as follows. Poorly processive, error-prone DNA polymerase involved in untargeted mutagenesis. Copies undamaged DNA at stalled replication forks, which arise in vivo from mismatched or misaligned primer ends. These misaligned primers can be extended by PolIV. Exhibits no 3'-5' exonuclease (proofreading) activity. May be involved in translesional synthesis, in conjunction with the beta clamp from PolIII. The chain is DNA polymerase IV from Francisella tularensis subsp. holarctica (strain OSU18).